We begin with the raw amino-acid sequence, 190 residues long: Shikimate kinase (190 aa).

19–24 (GSGKTT) contacts ATP. Threonine 23 lines the Mg(2+) pocket. The substrate site is built by aspartate 41, arginine 65, and glycine 87. Arginine 124 serves as a coordination point for ATP. Residue arginine 143 coordinates substrate.

This sequence belongs to the shikimate kinase family. As to quaternary structure, monomer. Mg(2+) is required as a cofactor.

It localises to the cytoplasm. It catalyses the reaction shikimate + ATP = 3-phosphoshikimate + ADP + H(+). It participates in metabolic intermediate biosynthesis; chorismate biosynthesis; chorismate from D-erythrose 4-phosphate and phosphoenolpyruvate: step 5/7. Its function is as follows. Catalyzes the specific phosphorylation of the 3-hydroxyl group of shikimic acid using ATP as a cosubstrate. This is Shikimate kinase from Synechococcus sp. (strain ATCC 27144 / PCC 6301 / SAUG 1402/1) (Anacystis nidulans).